We begin with the raw amino-acid sequence, 514 residues long: Putative ribose/galactose/methyl galactoside import ATP-binding protein 3 (514 aa).

ABC transporter domains are found at residues 21–256 and 267–512; these read LRLD…VGRT and VPTD…SGRS. 53-60 contributes to the ATP binding site; it reads GENGAGKS.

It belongs to the ABC transporter superfamily. Carbohydrate importer 2 (CUT2) (TC 3.A.1.2) family.

It is found in the cell inner membrane. The enzyme catalyses D-ribose(out) + ATP + H2O = D-ribose(in) + ADP + phosphate + H(+). The catalysed reaction is D-galactose(out) + ATP + H2O = D-galactose(in) + ADP + phosphate + H(+). Its function is as follows. Part of an ABC transporter complex involved in carbohydrate import. Could be involved in ribose, galactose and/or methyl galactoside import. Responsible for energy coupling to the transport system. This Burkholderia cenocepacia (strain HI2424) protein is Putative ribose/galactose/methyl galactoside import ATP-binding protein 3.